Here is a 151-residue protein sequence, read N- to C-terminus: IFN signaling evasion protein OPG029 (151 aa).

Belongs to the orthopoxvirus OPG029 family. In terms of assembly, interacts with host TANK, TBKBP1 and AZI2; these interactions prevent interferon production. Interacts with host STAT2.

Functionally, prevents establishment of cellular antiviral state by blocking virus-induced phosphorylation and activation of interferon regulatory factors 3/IRF3 and 7/IRF7, transcription factors critical for the induction of interferons alpha and beta. This blockage is produced through the inhibition of host TBK1, by binding host TBK1 adapter proteins TBKBP1 and AZI2, thereby producing a strong inhibition of the phosphorylation and activation of IRF3 and IRF7. Also acts as an inhibitor of the cellular response to type I IFN by interacting with host STAT2. Mechanistically, exerts its inhibitory effect after host ISGF3 complex (composed of STAT1, STAT2 and IRF9) binding to the interferon stimulated response element (ISRE). This chain is IFN signaling evasion protein OPG029 (OPG029), found in Homo sapiens (Human).